The primary structure comprises 156 residues: Probable succinate transporter subunit YjjB (156 aa).

Helical transmembrane passes span 7-27 (WALL…AMVF), 54-74 (FGMN…VIGI), 86-106 (VFTV…TAMI), and 128-148 (FLKA…PGLW).

Belongs to the ThrE exporter (TC 2.A.79) family. In terms of assembly, the transporter is composed of YjjB and YjjP.

Its subcellular location is the cell inner membrane. Functionally, involved in succinate export with YjjP. Both proteins are required for export. The chain is Probable succinate transporter subunit YjjB from Yersinia pseudotuberculosis serotype I (strain IP32953).